Here is a 4910-residue protein sequence, read N- to C-terminus: Midasin (4910 aa).

AAA-ATPase protomer stretches follow at residues 305–528 and 636–975; these read IQNS…DILF and MEQI…TDII. ATP is bound by residues 315–322 and 653–660; these read GKAGSGKT and GETGTGKT. The tract at residues 695–803 is interaction with RIX1; that stretch reads VNSKTVAVPI…KKFEAQSSSI (109 aa). Thr1026 is subject to Phosphothreonine. 4 AAA-ATPase protomer regions span residues 1054–1280, 1345–1624, 1732–1985, and 2036–2286; these read HYII…WALR, KGMR…VEFI, RVVR…QLLI, and VYES…DELH. ATP is bound by residues 1083-1090, 1368-1375, 1747-1754, and 2054-2061; these read GPTSSGKT, GETGCGKT, GSPGVGKT, and GPSNSGKT. Positions 2372 to 4075 are linker; sequence EVGKWANNVL…DGEGAQNNNK (1704 aa). Ser2971 is subject to Phosphoserine. Disordered regions lie at residues 4045–4547, 4555–4574, and 4579–4600; these read SPQP…EKMD, SDID…SGFI, and SEED…EDDS. The span at 4078–4088 shows a compositional bias: acidic residues; it reads EQDEDLTEDAQ. A compositionally biased stretch (basic and acidic residues) spans 4089–4098; sequence NENKEQQDKD. Acidic residues predominate over residues 4099–4154; the sequence is ERDDENEDDAVEMEGDMAGELEDLSNGEENDDEDTDSEEEELDEEIDDLNEDDPNA. Over residues 4155–4174 the composition is skewed to basic and acidic residues; that stretch reads IDDKMWDDKASDNSKEKDTD. 3 stretches are compositionally biased toward acidic residues: residues 4202-4244, 4251-4274, and 4288-4358; these read GDED…EDLE, ETLD…DVDM, and GNED…EEEL. Ser4353 is modified (phosphoserine). Residues 4359 to 4372 show a composition bias toward basic and acidic residues; sequence KQDAAMEENKEKGG. Thr4388 is subject to Phosphothreonine. Basic and acidic residues-rich tracts occupy residues 4435–4447 and 4481–4495; these read DVTK…REEA and LEKN…EHVE. The segment covering 4498–4516 has biased composition (polar residues); sequence NTETDTQALGSATQDQLQT. Residues 4517–4531 show a composition bias toward acidic residues; sequence IDEDMAIDDDREEQE. Ser4555 is subject to Phosphoserine. Residues 4557–4570 show a composition bias toward basic and acidic residues; sequence IDAHDANNDVDSKK. The 196-residue stretch at 4704-4899 folds into the VWFA domain; the sequence is QIMIALDDSK…SELPEMLSLI (196 aa).

Belongs to the midasin family. As to quaternary structure, associates with pre-60S ribosomes in the nucleoplasm. Interacts (via its hexameric AAA ATPase ring) with the RIX1 complex (via RIX1); this interaction is crucial for recruitment of MDN1 to the pre-ribosomal particle. Interacts (via VWFA/MIDAS domain) with YTM1 (via UBL domain). Interacts (via VWFA/MIDAS domain) with RSA4 (via UBL domain).

The protein resides in the nucleus. The protein localises to the nucleolus. It localises to the nucleoplasm. Nuclear chaperone required for maturation and nuclear export of pre-60S ribosome subunits. Functions at successive maturation steps to remove ribosomal factors at critical transition points, first driving the exit of early pre-60S particles from the nucleolus and then driving late pre-60S particles from the nucleus. At an early stage in 60S maturation, mediates the dissociation of the NOP7 complex (YTM1-ERB1-NOP7) from early pre-60S particles, rendering them competent for export from the nucleolus to the nucleoplasm. Subsequently recruited to the nucleoplasmic particles through interaction with the RIX1 complex. This binding is only possible if the 5S RNP at the central protuberance has undergone the rotation to complete its maturation. After remodeling, removes the ribosome biogenesis factor RSA4 in an ATP hydrolysis-driven step from pre-60S ribosomal subunits, rendering them competent for export from the nucleoplasm to the cytoplasm. Activates the GTPase activity of NOG2, which disengages from the pre-60S particle upon GTP hydrolysis, thus freeing its binding site for the nuclear export factor NMD3. The chain is Midasin (MDN1) from Saccharomyces cerevisiae (strain ATCC 204508 / S288c) (Baker's yeast).